We begin with the raw amino-acid sequence, 347 residues long: MIETDRLITPAPLSLKEEDLERALRPKHLAEYIGQEKIRGQLQIFIEAARRRREALDHVLLFGPPGLGKTTLAHIVAKEMGVGLRQTSGPVLERPGDLAALLTNLEPNDVLFIDEIHRLSPVVEEILYPALEDYQLDIMIGEGPAARSVKLDLPPFTLVGATTRAGMLTNPLRDRFGIISRLEFYSVEELTQIVMRSAALLGADISPDGATEIARRSRGTPRVVNRLLRRVRDFAEVKAEGRINRQVADAALLMLDVDAIGLDVMDRKLLLTVMEKFGGGPVGVDNLAAAISEERGTIEDVLEPYLIQQGYMKRTPRGRMATSIAYQHFGLALPRNGLSADLWDEKQ.

Residues 4 to 185 (TDRLITPAPL…FGIISRLEFY (182 aa)) form a large ATPase domain (RuvB-L) region. Residues Leu-24, Arg-25, Gly-66, Lys-69, Thr-70, Thr-71, 132 to 134 (EDY), Arg-175, Tyr-185, and Arg-222 each bind ATP. Residue Thr-70 participates in Mg(2+) binding. Residues 186 to 256 (SVEELTQIVM…VADAALLMLD (71 aa)) are small ATPAse domain (RuvB-S). The interval 259-347 (AIGLDVMDRK…LSADLWDEKQ (89 aa)) is head domain (RuvB-H). Arg-295, Arg-314, and Arg-319 together coordinate DNA.

It belongs to the RuvB family. As to quaternary structure, homohexamer. Forms an RuvA(8)-RuvB(12)-Holliday junction (HJ) complex. HJ DNA is sandwiched between 2 RuvA tetramers; dsDNA enters through RuvA and exits via RuvB. An RuvB hexamer assembles on each DNA strand where it exits the tetramer. Each RuvB hexamer is contacted by two RuvA subunits (via domain III) on 2 adjacent RuvB subunits; this complex drives branch migration. In the full resolvosome a probable DNA-RuvA(4)-RuvB(12)-RuvC(2) complex forms which resolves the HJ.

It localises to the cytoplasm. The catalysed reaction is ATP + H2O = ADP + phosphate + H(+). Its function is as follows. The RuvA-RuvB-RuvC complex processes Holliday junction (HJ) DNA during genetic recombination and DNA repair, while the RuvA-RuvB complex plays an important role in the rescue of blocked DNA replication forks via replication fork reversal (RFR). RuvA specifically binds to HJ cruciform DNA, conferring on it an open structure. The RuvB hexamer acts as an ATP-dependent pump, pulling dsDNA into and through the RuvAB complex. RuvB forms 2 homohexamers on either side of HJ DNA bound by 1 or 2 RuvA tetramers; 4 subunits per hexamer contact DNA at a time. Coordinated motions by a converter formed by DNA-disengaged RuvB subunits stimulates ATP hydrolysis and nucleotide exchange. Immobilization of the converter enables RuvB to convert the ATP-contained energy into a lever motion, pulling 2 nucleotides of DNA out of the RuvA tetramer per ATP hydrolyzed, thus driving DNA branch migration. The RuvB motors rotate together with the DNA substrate, which together with the progressing nucleotide cycle form the mechanistic basis for DNA recombination by continuous HJ branch migration. Branch migration allows RuvC to scan DNA until it finds its consensus sequence, where it cleaves and resolves cruciform DNA. In Nitrosospira multiformis (strain ATCC 25196 / NCIMB 11849 / C 71), this protein is Holliday junction branch migration complex subunit RuvB.